We begin with the raw amino-acid sequence, 520 residues long: MAAAEPDADPKAAIPVDLRRERRLVCVEYPGVVRNEAKMLQTLGGEESVSRIYTDPTKRLELYFRPKDPYCHPVCANRFSTSSLLLRIRKRTRRRRGVLGDEAHPQVTFNLEIIGIISTIYKFQGMSDFQYLAVHTEAGGKHVSMYDRVLMRKPEKEEFFHQELPLYIPPPIFSRLDTPVDYFYRPETQHREGYHNPTISGENLIGLSRARRPHNAIFVNFEDTEVPEQPLEAAVQTWKKACTNPIDQKVEEELRKLFDIRPVWSRNAVKSNVSVHPDKLKILLPYMAYYMITGPWRSLWIRFGYDPRKHPDAKIYQVLDFRIRCGMKYGYGSRDMPVKAKRSTYNYSLPITVKKTSNQPGTMHDLKQGLGPSGTDGPRKLTYNKYKLKDSVYIFREGALPPYRQMFYQLCDLNVEELQKIVHRNDGTETVCTERDGWCLPKTTDHLRDTMSLMILQTIRSERPALFSNTGKADRGKEQLMFESGEEEEEEEEEEEEEEEDFKPSDGSENEMETEILDYV.

Ala2 carries the post-translational modification N-acetylalanine. The tract at residues Leu466 to Val520 is disordered. Composition is skewed to acidic residues over residues Ser484–Asp501 and Ser508–Val520.

This sequence belongs to the TFIIIC subunit 5 family. Part of the TFIIIC subcomplex TFIIIC2, consisting of six subunits, GTF3C1, GTF3C2, GTF3C3, GTF3C4, GTF3C5 and GTF3C6. Interacts with BRF1, GTF3C6 and TBP.

The protein localises to the nucleus. Involved in RNA polymerase III-mediated transcription. Integral, tightly associated component of the DNA-binding TFIIIC2 subcomplex that directly binds tRNA and virus-associated RNA promoters. The sequence is that of General transcription factor 3C polypeptide 5 (Gtf3c5) from Mus musculus (Mouse).